The chain runs to 570 residues: Protein NRT1/ PTR FAMILY 8.2 (570 aa).

Residue threonine 99 is modified to Phosphothreonine. 10 helical membrane passes run 100-120 (IASFVVIYIAGMTLLTISASV), 136-156 (AGQTAITFIALYLIALGTGGI), 182-202 (FFNWFYFVINVGAMIASSVLV), 210-230 (WGWGLGVPTVAMAIAVVFFFA), 335-355 (IWATGIVFASVYSQMGTVFVL), 370-390 (IPSASLSLFDTLSVLFWAPVY), 414-434 (IGIGLVISIFSMVSAGILEVA), 454-474 (IFWQVPQYFLVGCAEVFTFIG), 493-513 (ALSLTAIAFGNYLSTFLVTLV), and 537-557 (YFFWLLAGLSFLNFLVYLWIA).

Belongs to the major facilitator superfamily. Proton-dependent oligopeptide transporter (POT/PTR) (TC 2.A.17) family. Expressed in developing and germinating pollen grains and ovules.

The protein localises to the cell membrane. Its function is as follows. Peptide transporter. Mediates the transport of di- and tripeptides. High affinity transporter. Involved in the uptake of peptides during pollen germination and tube growth. This Arabidopsis thaliana (Mouse-ear cress) protein is Protein NRT1/ PTR FAMILY 8.2 (NPF8.2).